The following is a 615-amino-acid chain: DNA mismatch repair protein MutL (615 aa).

The interval 363 to 397 is disordered; sequence FAEPAVREPVAPRYTPAPASGSRPAAPWPNAQPGY. Residues 378-391 are compositionally biased toward low complexity; the sequence is PAPASGSRPAAPWP.

This sequence belongs to the DNA mismatch repair MutL/HexB family.

Its function is as follows. This protein is involved in the repair of mismatches in DNA. It is required for dam-dependent methyl-directed DNA mismatch repair. May act as a 'molecular matchmaker', a protein that promotes the formation of a stable complex between two or more DNA-binding proteins in an ATP-dependent manner without itself being part of a final effector complex. The polypeptide is DNA mismatch repair protein MutL (Escherichia coli O157:H7).